We begin with the raw amino-acid sequence, 771 residues long: Phosphoglycerate kinase (771 aa).

Positions 1-406 are phosphoglycerate kinase; the sequence is MKKLITDLNL…PGIDAIQNYE (406 aa). Substrate-binding positions include 20–22, R35, 58–61, R118, and R155; these read DLN and HLGR. ATP contacts are provided by residues K206, G295, E334, and 361 to 364; that span reads GGDS. The segment at 407–771 is unknown; it reads QTYEQYDSQV…KRFWFFGRKR (365 aa).

It in the N-terminal section; belongs to the phosphoglycerate kinase family. In terms of assembly, monomer.

The protein localises to the cytoplasm. The catalysed reaction is (2R)-3-phosphoglycerate + ATP = (2R)-3-phospho-glyceroyl phosphate + ADP. Its pathway is carbohydrate degradation; glycolysis; pyruvate from D-glyceraldehyde 3-phosphate: step 2/5. This Mycoplasmopsis pulmonis (strain UAB CTIP) (Mycoplasma pulmonis) protein is Phosphoglycerate kinase (pgk).